The chain runs to 363 residues: Aminomethyltransferase (363 aa).

This sequence belongs to the GcvT family. As to quaternary structure, the glycine cleavage system is composed of four proteins: P, T, L and H.

It catalyses the reaction N(6)-[(R)-S(8)-aminomethyldihydrolipoyl]-L-lysyl-[protein] + (6S)-5,6,7,8-tetrahydrofolate = N(6)-[(R)-dihydrolipoyl]-L-lysyl-[protein] + (6R)-5,10-methylene-5,6,7,8-tetrahydrofolate + NH4(+). Its function is as follows. The glycine cleavage system catalyzes the degradation of glycine. This Thermosipho melanesiensis (strain DSM 12029 / CIP 104789 / BI429) protein is Aminomethyltransferase.